Reading from the N-terminus, the 178-residue chain is Sec-independent protein translocase protein TatB (178 aa).

Residues 1 to 21 (MFDIGWSELVVIAVVALIAIG) traverse the membrane as a helical segment. Positions 77-86 (TSGNLMTKLT) are enriched in polar residues. Residues 77 to 178 (TSGNLMTKLT…HEAVKDAKAS (102 aa)) are disordered. A compositionally biased stretch (basic and acidic residues) spans 93–102 (PKLEDLDKPA). The segment covering 155–165 (HATPEPAPATH) has biased composition (low complexity). Over residues 166 to 178 (ETPHEAVKDAKAS) the composition is skewed to basic and acidic residues.

Belongs to the TatB family. In terms of assembly, the Tat system comprises two distinct complexes: a TatABC complex, containing multiple copies of TatA, TatB and TatC subunits, and a separate TatA complex, containing only TatA subunits. Substrates initially bind to the TatABC complex, which probably triggers association of the separate TatA complex to form the active translocon.

It localises to the cell inner membrane. Part of the twin-arginine translocation (Tat) system that transports large folded proteins containing a characteristic twin-arginine motif in their signal peptide across membranes. Together with TatC, TatB is part of a receptor directly interacting with Tat signal peptides. TatB may form an oligomeric binding site that transiently accommodates folded Tat precursor proteins before their translocation. This is Sec-independent protein translocase protein TatB from Nitrobacter hamburgensis (strain DSM 10229 / NCIMB 13809 / X14).